The chain runs to 498 residues: Glycerol kinase (498 aa).

Threonine 14 serves as a coordination point for ADP. The ATP site is built by threonine 14, threonine 15, and serine 16. Residue threonine 14 participates in sn-glycerol 3-phosphate binding. Arginine 18 is a binding site for ADP. The sn-glycerol 3-phosphate site is built by arginine 84, glutamate 85, tyrosine 136, and aspartate 245. Positions 84, 85, 136, 245, and 246 each coordinate glycerol. 2 residues coordinate ADP: threonine 267 and glycine 310. ATP-binding residues include threonine 267, glycine 310, glutamine 314, and glycine 410. The ADP site is built by glycine 410 and asparagine 414.

The protein belongs to the FGGY kinase family.

It catalyses the reaction glycerol + ATP = sn-glycerol 3-phosphate + ADP + H(+). Its pathway is polyol metabolism; glycerol degradation via glycerol kinase pathway; sn-glycerol 3-phosphate from glycerol: step 1/1. With respect to regulation, inhibited by fructose 1,6-bisphosphate (FBP). In terms of biological role, key enzyme in the regulation of glycerol uptake and metabolism. Catalyzes the phosphorylation of glycerol to yield sn-glycerol 3-phosphate. The polypeptide is Glycerol kinase (Rhodospirillum centenum (strain ATCC 51521 / SW)).